The primary structure comprises 376 residues: N6-methyladenosine RNA methyltransferase MTA1 (376 aa).

The segment at 53 to 78 is disordered; that stretch reads TRRLISSPPPETPFVTPEPKNGPSPL.

This sequence belongs to the MT-A70-like family.

The enzyme catalyses an adenosine in mRNA + S-adenosyl-L-methionine = an N(6)-methyladenosine in mRNA + S-adenosyl-L-homocysteine + H(+). In terms of biological role, N6-methyladenosine RNA methyltransferase that plays a crucial role in fungal phenotypic traits, virulence, and stress tolerance. Mediates the methylation of mRNAs to produce N6-methyladenosine (m6A)-containing mRNAs. M6A is a modification present at internal sites of mRNAs and some non-coding RNAs and plays a role in mRNA stability and processing. Required for appressorium turgor pressure and regulates autophagosome formation during appressorium formation stage. Specifically, mediates the stability of ATG8 mRNA in a m6A-dependent manner via modification of the m6A site A982 located in 3'UTR region. In Pyricularia oryzae (strain 70-15 / ATCC MYA-4617 / FGSC 8958) (Rice blast fungus), this protein is N6-methyladenosine RNA methyltransferase MTA1.